Consider the following 218-residue polypeptide: UPF0598 protein C8orf82 homolog (218 aa).

Belongs to the UPF0598 family.

This Rattus norvegicus (Rat) protein is UPF0598 protein C8orf82 homolog.